Here is a 226-residue protein sequence, read N- to C-terminus: Thioredoxin domain-containing protein 9 (226 aa).

Positions 74–180 constitute a Thioredoxin domain; the sequence is REIPSERDFF…TTETLEWRLG (107 aa). Phosphoserine is present on residues serine 188, serine 221, and serine 223.

In terms of assembly, forms ternary complexes with the chaperonin TCP1 complex, spanning the cylindrical chaperonin cavity and contacting at least 2 subunits.

The protein localises to the cytoplasm. It is found in the nucleus. It localises to the cytoskeleton. Its subcellular location is the microtubule organizing center. The protein resides in the centrosome. The protein localises to the midbody. In terms of biological role, significantly diminishes the chaperonin TCP1 complex ATPase activity, thus negatively impacts protein folding, including that of actin or tubulin. The chain is Thioredoxin domain-containing protein 9 (TXNDC9) from Homo sapiens (Human).